The following is a 502-amino-acid chain: MTEKKYIVALDQGTTSSRAVVMDHDANIISVSQREFEQIYPKPGWVEHDPMEIWATQSSTLVEVLAKADISSDQIAAIGITNQRETTIVWEKETGKPIYNAIVWQCRRTAEICEHLKRDGLEDYIRSNTGLVLDPYFSGTKVKWILDHVEGSHERARRGELLFGTVDTWLIWKMTQGRVHVTDYTNASRTMLFNIHTLDWDDKMLEVLDIPREMLPEVRRSSEVYGQTNIGGKGGTRIPISGIAGDQQAALFGQLCVKEGMAKNTYGTGCFMLMNTGEKAVKSENGLLTTIACGPTGEVNYALEGAVFMAGASIQWLRDEMKLINDAYDSEYFATKVQNTNGVYVVPAFTGLGAPYWDPYARGAIFGLTRGVNANHIIRATLESIAYQTRDVLEAMQADSGIRLHALRVDGGAVANNFLMQFQSDILGTRVERPEVREVTALGAAYLAGLAVGFWQNLDELQEKAVIEREFRPGIETTERNYRYAGWKKAVKRAMAWEEHDE.

Residue Thr-14 participates in ADP binding. 3 residues coordinate ATP: Thr-14, Thr-15, and Ser-16. Sn-glycerol 3-phosphate is bound at residue Thr-14. Arg-18 provides a ligand contact to ADP. Positions 84, 85, 136, and 246 each coordinate sn-glycerol 3-phosphate. Residues Arg-84, Glu-85, Tyr-136, Asp-246, and Gln-247 each contribute to the glycerol site. ADP-binding residues include Thr-268 and Gly-311. 4 residues coordinate ATP: Thr-268, Gly-311, Gln-315, and Gly-412. Positions 412 and 416 each coordinate ADP.

Belongs to the FGGY kinase family. As to quaternary structure, homotetramer and homodimer (in equilibrium). Heterodimer with EIIA-Glc. Binds 1 zinc ion per glycerol kinase EIIA-Glc dimer. The zinc ion is important for dimerization.

It catalyses the reaction glycerol + ATP = sn-glycerol 3-phosphate + ADP + H(+). It functions in the pathway polyol metabolism; glycerol degradation via glycerol kinase pathway; sn-glycerol 3-phosphate from glycerol: step 1/1. Activity of this regulatory enzyme is affected by several metabolites. Allosterically and non-competitively inhibited by fructose 1,6-bisphosphate (FBP) and unphosphorylated phosphocarrier protein EIIA-Glc (III-Glc), an integral component of the bacterial phosphotransferase (PTS) system. In terms of biological role, key enzyme in the regulation of glycerol uptake and metabolism. Catalyzes the phosphorylation of glycerol to yield sn-glycerol 3-phosphate. This is Glycerol kinase from Shigella flexneri.